Consider the following 635-residue polypeptide: Chaperone protein HtpG (635 aa).

The a; substrate-binding stretch occupies residues 1-336; that stretch reads MTTAEAAAPE…SADLPLNLSR (336 aa). The segment at 337–556 is b; it reads EMLQDSAILA…ESGIDRRLEK (220 aa). Residues 557 to 635 form a c region; that stretch reads LLASAGRLGD…RVMQRGLPTA (79 aa).

This sequence belongs to the heat shock protein 90 family. Homodimer.

It is found in the cytoplasm. Functionally, molecular chaperone. Has ATPase activity. The chain is Chaperone protein HtpG from Azorhizobium caulinodans (strain ATCC 43989 / DSM 5975 / JCM 20966 / LMG 6465 / NBRC 14845 / NCIMB 13405 / ORS 571).